Reading from the N-terminus, the 147-residue chain is Hemoglobin subunit beta (147 aa).

Positions Glu-3–His-147 constitute a Globin domain. Residues His-64 and His-93 each contribute to the heme b site.

The protein belongs to the globin family. In terms of assembly, heterotetramer of two alpha chains and two beta chains. Red blood cells.

Its function is as follows. Involved in oxygen transport from gills to the various peripheral tissues. The protein is Hemoglobin subunit beta (hbb) of Merlangius merlangus (Whiting).